A 116-amino-acid polypeptide reads, in one-letter code: Large ribosomal subunit protein bL17 (116 aa).

The protein belongs to the bacterial ribosomal protein bL17 family. As to quaternary structure, part of the 50S ribosomal subunit. Contacts protein L32.

The protein is Large ribosomal subunit protein bL17 of Prochlorococcus marinus (strain SARG / CCMP1375 / SS120).